The chain runs to 308 residues: tRNA dimethylallyltransferase (308 aa).

9–16 (GPTAVGKT) serves as a coordination point for ATP. Position 11 to 16 (11 to 16 (TAVGKT)) interacts with substrate. The segment at 34 to 37 (DSMQ) is interaction with substrate tRNA.

Belongs to the IPP transferase family. In terms of assembly, monomer. Requires Mg(2+) as cofactor.

It carries out the reaction adenosine(37) in tRNA + dimethylallyl diphosphate = N(6)-dimethylallyladenosine(37) in tRNA + diphosphate. Catalyzes the transfer of a dimethylallyl group onto the adenine at position 37 in tRNAs that read codons beginning with uridine, leading to the formation of N6-(dimethylallyl)adenosine (i(6)A). The protein is tRNA dimethylallyltransferase of Lactobacillus delbrueckii subsp. bulgaricus (strain ATCC 11842 / DSM 20081 / BCRC 10696 / JCM 1002 / NBRC 13953 / NCIMB 11778 / NCTC 12712 / WDCM 00102 / Lb 14).